We begin with the raw amino-acid sequence, 199 residues long: Octanoyltransferase (199 aa).

The region spanning 27–199 (SNSYDELWLL…FVQYFLTQFK (173 aa)) is the BPL/LPL catalytic domain. Substrate contacts are provided by residues 66–73 (RGGQVTYH), 133–135 (SIG), and 146–148 (GIA). The active-site Acyl-thioester intermediate is C164.

It belongs to the LipB family.

It is found in the cytoplasm. The enzyme catalyses octanoyl-[ACP] + L-lysyl-[protein] = N(6)-octanoyl-L-lysyl-[protein] + holo-[ACP] + H(+). It functions in the pathway protein modification; protein lipoylation via endogenous pathway; protein N(6)-(lipoyl)lysine from octanoyl-[acyl-carrier-protein]: step 1/2. Catalyzes the transfer of endogenously produced octanoic acid from octanoyl-acyl-carrier-protein onto the lipoyl domains of lipoate-dependent enzymes. Lipoyl-ACP can also act as a substrate although octanoyl-ACP is likely to be the physiological substrate. The sequence is that of Octanoyltransferase from Legionella pneumophila (strain Lens).